A 100-amino-acid chain; its full sequence is Large ribosomal subunit protein bL28 (100 aa).

Belongs to the bacterial ribosomal protein bL28 family.

This is Large ribosomal subunit protein bL28 from Gluconobacter oxydans (strain 621H) (Gluconobacter suboxydans).